A 318-amino-acid polypeptide reads, in one-letter code: Acetylglutamate kinase (318 aa).

Residues 80 to 81 (GG), R102, and N203 each bind substrate.

Belongs to the acetylglutamate kinase family. ArgB subfamily.

The protein resides in the cytoplasm. The catalysed reaction is N-acetyl-L-glutamate + ATP = N-acetyl-L-glutamyl 5-phosphate + ADP. Its pathway is amino-acid biosynthesis; L-arginine biosynthesis; N(2)-acetyl-L-ornithine from L-glutamate: step 2/4. Functionally, catalyzes the ATP-dependent phosphorylation of N-acetyl-L-glutamate. The chain is Acetylglutamate kinase from Bifidobacterium adolescentis (strain ATCC 15703 / DSM 20083 / NCTC 11814 / E194a).